The sequence spans 208 residues: Small ribosomal subunit protein eS8 (208 aa).

The segment at 1–27 is disordered; that stretch reads MGISRDNWHKRRRTGGKRKPVHKKRKY. The span at 8 to 26 shows a compositional bias: basic residues; it reads WHKRRRTGGKRKPVHKKRK.

It belongs to the eukaryotic ribosomal protein eS8 family. Component of the small ribosomal subunit. Identified in a IGF2BP1-dependent mRNP granule complex containing untranslated mRNAs. Part of the small subunit (SSU) processome, composed of more than 70 proteins and the RNA chaperone small nucleolar RNA (snoRNA) U3.

It is found in the cytoplasm. The protein resides in the membrane. It localises to the nucleus. Its subcellular location is the nucleolus. Component of the small ribosomal subunit. The ribosome is a large ribonucleoprotein complex responsible for the synthesis of proteins in the cell. Part of the small subunit (SSU) processome, first precursor of the small eukaryotic ribosomal subunit. During the assembly of the SSU processome in the nucleolus, many ribosome biogenesis factors, an RNA chaperone and ribosomal proteins associate with the nascent pre-rRNA and work in concert to generate RNA folding, modifications, rearrangements and cleavage as well as targeted degradation of pre-ribosomal RNA by the RNA exosome. The protein is Small ribosomal subunit protein eS8 (rps8) of Danio rerio (Zebrafish).